Consider the following 139-residue polypeptide: uncharacterized protein (139 aa).

This is an uncharacterized protein from Ostreid herpesvirus 1 (isolate France) (OsHV-1).